The primary structure comprises 471 residues: Coagulation factor IX (471 aa).

Positions 1-19 are cleaved as a signal peptide; that stretch reads MAKIPLILSFCLLEAFLGA. Residues 20–39 constitute a propeptide that is removed on maturation; that stretch reads ESTVFIENKEASTVLSRTRR. In terms of domain architecture, Gla spans 40–85; that stretch reads GNSNRLEELIPGNLERECIEEKCSFEEAREVFENTEKTMEFWKIYI. Residues N41, E46, E47, E54, E56, E59, E60, E65, E66, and E69 each coordinate Ca(2+). E46, E47, E54, E56, E59, E60, E65, E66, E69, E72, E75, and E79 each carry 4-carboxyglutamate. E54 lines the Mg(2+) pocket. A disulfide bond links C57 and C62. E59 contacts Mg(2+). Position 65 (E65) interacts with Mg(2+). Position 69 (E69) interacts with Mg(2+). Positions 75, 79, 86, 87, and 89 each coordinate Ca(2+). Mg(2+)-binding residues include E75 and E79. In terms of domain architecture, EGF-like 1; calcium-binding spans 86–122; sequence DGDQCNSNPCKNGAVCKDGVSSYECMCPPGYGGRNCE. Intrachain disulfides connect C90/C101, C95/C110, C112/C121, C127/C138, C134/C148, C150/C163, C171/C345, C262/C278, C392/C406, and C417/C445. A glycan (O-linked (Glc...) serine) is linked at S92. Position 103 (D103) interacts with Ca(2+). Position 103 is a (3R)-3-hydroxyaspartate (D103). At S107 the chain carries Phosphoserine. The region spanning 123–164 is the EGF-like 2 domain; it reads IDSTCATKNGGCEHFCRHDTPQKAVCSCASGYKLHEDGKSCK. A propeptide spans 186–235 (activation peptide); it reads TENTIERWNITAHDEGDAHDEALDITEPPPPPTTSAAPAKIVPITKNDTR. Positions 236–469 constitute a Peptidase S1 domain; it reads VVGGYDSVKG…YVKWIRETTR (234 aa). Residue H277 is the Charge relay system of the active site. 4 residues coordinate Ca(2+): E291, N293, E296, and E301. D325 acts as the Charge relay system in catalysis. S421 (charge relay system) is an active-site residue.

This sequence belongs to the peptidase S1 family. Heterodimer of a light chain and a heavy chain; disulfide-linked. Post-translationally, activated by factor XIa, which excises the activation peptide. The propeptide can also be removed by snake venom protease. Activated by coagulation factor VIIa-tissue factor (F7-F3) complex in calcium-dependent manner. The iron and 2-oxoglutarate dependent 3-hydroxylation of aspartate and asparagine is (R) stereospecific within EGF domains.

It is found in the secreted. It carries out the reaction Selective cleavage of Arg-|-Ile bond in factor X to form factor Xa.. In terms of biological role, factor IX is a vitamin K-dependent plasma protein that participates in the intrinsic pathway of blood coagulation by converting factor X to its active form in the presence of Ca(2+) ions, phospholipids, and factor VIIIa. This chain is Coagulation factor IX (F9), found in Gallus gallus (Chicken).